The primary structure comprises 358 residues: Mannonate dehydratase (358 aa).

Belongs to the mannonate dehydratase family. Fe(2+) is required as a cofactor. It depends on Mn(2+) as a cofactor.

The enzyme catalyses D-mannonate = 2-dehydro-3-deoxy-D-gluconate + H2O. Its pathway is carbohydrate metabolism; pentose and glucuronate interconversion. In terms of biological role, catalyzes the dehydration of D-mannonate. The protein is Mannonate dehydratase of Lachnoclostridium phytofermentans (strain ATCC 700394 / DSM 18823 / ISDg) (Clostridium phytofermentans).